Consider the following 493-residue polypeptide: Lysine--tRNA ligase (493 aa).

Mg(2+) contacts are provided by Glu404 and Glu411.

This sequence belongs to the class-II aminoacyl-tRNA synthetase family. In terms of assembly, homodimer. Mg(2+) is required as a cofactor.

It localises to the cytoplasm. The enzyme catalyses tRNA(Lys) + L-lysine + ATP = L-lysyl-tRNA(Lys) + AMP + diphosphate. The protein is Lysine--tRNA ligase of Oceanobacillus iheyensis (strain DSM 14371 / CIP 107618 / JCM 11309 / KCTC 3954 / HTE831).